Reading from the N-terminus, the 526-residue chain is Non-reducing end alpha-L-arabinofuranosidase BoGH43A (526 aa).

The first 20 residues, 1–20, serve as a signal peptide directing secretion; that stretch reads MRNALFLIFISLCSVCKSSA. The active-site Proton acceptor is the aspartate 34. The active-site Proton donor is glutamate 189.

The protein belongs to the glycosyl hydrolase 43 family.

It localises to the periplasm. It carries out the reaction Hydrolysis of terminal non-reducing alpha-L-arabinofuranoside residues in alpha-L-arabinosides.. It participates in glucan metabolism; xyloglucan degradation. Functionally, alpha-L-arabinofuranosidase involved in xyloglucan degradation by mediating the cleavage of terminal non-reducing alpha-L-arabinofuranoside residues in xyloglucan branches, converting the 'S' units to 'X' units. This is Non-reducing end alpha-L-arabinofuranosidase BoGH43A from Bacteroides ovatus (strain ATCC 8483 / DSM 1896 / JCM 5824 / BCRC 10623 / CCUG 4943 / NCTC 11153).